A 420-amino-acid polypeptide reads, in one-letter code: Sodium-dependent phosphate transport protein 4 (420 aa).

The interval 1–21 is disordered; that stretch reads MATKTELSPTARESKNAQDMQ. 4 N-linked (GlcNAc...) asparagine glycosylation sites follow: Asn-49, Asn-60, Asn-68, and Asn-77. 8 consecutive transmembrane segments (helical) span residues 126-146, 154-174, 218-238, 256-276, 292-314, 319-341, 357-377, and 385-405; these read SIAL…GGFI, FVFY…FVVI, IWSI…MVVY, LLSA…GYLA, IATI…LNSG, TALL…INVL, GFSS…LSQD, and VFFL…IFGE.

It belongs to the major facilitator superfamily. Sodium/anion cotransporter family. As to expression, expressed in the liver and kidney. It is detected in proximal tubules in renal cortex as well as some tubules and glomeruli, with highest expression at the apical side of proximal tubules (at protein level).

Its subcellular location is the endoplasmic reticulum membrane. It localises to the cell membrane. It catalyses the reaction urate(in) + Na(+)(out) = urate(out) + Na(+)(in). Its function is as follows. Transports organic anions in a voltage-driven, multispecific, manner, on the apical side of renal proximal tubule. In particular, participates in the secretion of urate from the cell into the lumen. Urate is the end product of purine metabolism. May have roles in the metabolism and secretion of estrone sulfate, estradiol-17-beta-glucuronide, ochratoxin A, as wells as drugs such as bumetanide. This Homo sapiens (Human) protein is Sodium-dependent phosphate transport protein 4 (SLC17A3).